The sequence spans 972 residues: Protein NRDE2 homolog (972 aa).

Residues 1-17 (MPSNHNTSVPKFSSFNS) show a composition bias toward polar residues. The disordered stretch occupies residues 1-61 (MPSNHNTSVP…RSIQSNFAVD (61 aa)). Residues 19–33 (KAKKNPITKSNKKYR) are compositionally biased toward basic residues. The segment covering 37-59 (DQVSSNHAKSSFPSHRSIQSNFA) has biased composition (polar residues). 7 HAT repeats span residues 159–191 (LNIL…YQER), 250–282 (WSKE…YFTG), 318–350 (TDVT…YELA), 355–386 (QANM…FWNS), 608–640 (EEKP…LEHL), 788–820 (YNLP…FESK), and 860–894 (TNSQ…ILNL). Ser970 is modified (phosphoserine).

This sequence belongs to the NRDE2 family.

The protein resides in the nucleus. The polypeptide is Protein NRDE2 homolog (Schizosaccharomyces pombe (strain 972 / ATCC 24843) (Fission yeast)).